The primary structure comprises 151 residues: 3-hydroxyacyl-[acyl-carrier-protein] dehydratase FabZ (151 aa).

His54 is a catalytic residue.

It belongs to the thioester dehydratase family. FabZ subfamily.

The protein resides in the cytoplasm. The enzyme catalyses a (3R)-hydroxyacyl-[ACP] = a (2E)-enoyl-[ACP] + H2O. In terms of biological role, involved in unsaturated fatty acids biosynthesis. Catalyzes the dehydration of short chain beta-hydroxyacyl-ACPs and long chain saturated and unsaturated beta-hydroxyacyl-ACPs. The sequence is that of 3-hydroxyacyl-[acyl-carrier-protein] dehydratase FabZ from Klebsiella pneumoniae (strain 342).